The chain runs to 764 residues: FAST kinase domain-containing protein 5, mitochondrial (764 aa).

The transit peptide at 1–27 (MAATLKSLKLLRYQAFCSPSAFGAVRS) directs the protein to the mitochondrion. The disordered stretch occupies residues 68 to 94 (IPTTSSARPGLEFSKTSSSKASTLQLG). Residues 81–93 (SKTSSSKASTLQL) show a composition bias toward polar residues. A Phosphoserine modification is found at Ser95. Lys507 bears the N6-acetyllysine mark. The RAP domain occupies 697-757 (LAIQFTNRNQ…RLEKLAFLHE (61 aa)).

The protein belongs to the FAST kinase family. Found in a complex with GRSF1, DDX28, DHX30 and FASTKD2. Associates with the 12S mitochondrial rRNA (12S mt-rRNA).

The protein resides in the mitochondrion matrix. It localises to the mitochondrion nucleoid. Its function is as follows. Plays an important role in the processing of non-canonical mitochondrial mRNA precursors. This is FAST kinase domain-containing protein 5, mitochondrial (FASTKD5) from Pongo abelii (Sumatran orangutan).